The chain runs to 93 residues: Pyrimidine/purine nucleoside phosphorylase (93 aa).

The protein belongs to the nucleoside phosphorylase PpnP family.

It catalyses the reaction a purine D-ribonucleoside + phosphate = a purine nucleobase + alpha-D-ribose 1-phosphate. The enzyme catalyses adenosine + phosphate = alpha-D-ribose 1-phosphate + adenine. The catalysed reaction is cytidine + phosphate = cytosine + alpha-D-ribose 1-phosphate. It carries out the reaction guanosine + phosphate = alpha-D-ribose 1-phosphate + guanine. It catalyses the reaction inosine + phosphate = alpha-D-ribose 1-phosphate + hypoxanthine. The enzyme catalyses thymidine + phosphate = 2-deoxy-alpha-D-ribose 1-phosphate + thymine. The catalysed reaction is uridine + phosphate = alpha-D-ribose 1-phosphate + uracil. It carries out the reaction xanthosine + phosphate = alpha-D-ribose 1-phosphate + xanthine. Catalyzes the phosphorolysis of diverse nucleosides, yielding D-ribose 1-phosphate and the respective free bases. Can use uridine, adenosine, guanosine, cytidine, thymidine, inosine and xanthosine as substrates. Also catalyzes the reverse reactions. This is Pyrimidine/purine nucleoside phosphorylase from Shewanella pealeana (strain ATCC 700345 / ANG-SQ1).